The chain runs to 323 residues: Sphingolipid delta(4)-desaturase/C4-monooxygenase DES2 (323 aa).

The N-myristoyl glycine moiety is linked to residue Gly2. 2 helical membrane passes run 45–65 (WTVT…QGLA) and 68–88 (WLFF…TLAI). The Histidine box-1 motif lies at 89-93 (HDISH). Positions 95-99 (TAFGT) are required for C4-hydroxylase activity. The Histidine box-2 signature appears at 128–132 (HVDHH). Residues 209–231 (MVYLLASSLLGLGLHPISGHFVA) form a helical membrane-spanning segment. A Histidine box-3 motif is present at residues 259-263 (HMEHH).

Belongs to the fatty acid desaturase type 1 family. DEGS subfamily.

It localises to the endoplasmic reticulum membrane. It carries out the reaction a dihydroceramide + 2 Fe(II)-[cytochrome b5] + O2 + 2 H(+) = a phytoceramide + 2 Fe(III)-[cytochrome b5] + H2O. It catalyses the reaction an N-acylsphinganine + 2 Fe(II)-[cytochrome b5] + O2 + 2 H(+) = an N-acylsphing-4-enine + 2 Fe(III)-[cytochrome b5] + 2 H2O. The enzyme catalyses N-octanoylsphinganine + 2 Fe(II)-[cytochrome b5] + O2 + 2 H(+) = N-octanoyl-4-hydroxysphinganine + 2 Fe(III)-[cytochrome b5] + H2O. The catalysed reaction is an N-acylsphinganine + 2 Fe(II)-[cytochrome b5] + O2 + 2 H(+) = an N-acyl-(4R)-4-hydroxysphinganine + 2 Fe(III)-[cytochrome b5] + H2O. Its pathway is membrane lipid metabolism; sphingolipid biosynthesis. In terms of biological role, bifunctional enzyme which acts both as a sphingolipid delta(4)-desaturase and a sphingolipid C4-monooxygenase. The protein is Sphingolipid delta(4)-desaturase/C4-monooxygenase DES2 of Bos taurus (Bovine).